The following is a 307-amino-acid chain: Cytochrome f (307 aa).

The signal sequence occupies residues 1–24; that stretch reads MKKNLFLVSVFASLFVGTANNALA. 4 residues coordinate heme: Tyr-25, Cys-45, Cys-48, and His-49. The helical transmembrane segment at 273-293 threads the bilayer; the sequence is LQGLVIFLGFVLIAQVFLVLK.

This sequence belongs to the cytochrome f family. The 4 large subunits of the cytochrome b6-f complex are cytochrome b6, subunit IV (17 kDa polypeptide, petD), cytochrome f and the Rieske protein, while the 4 small subunits are PetG, PetL, PetM and PetN. The complex functions as a dimer. Heme serves as cofactor.

The protein resides in the plastid. Its subcellular location is the chloroplast thylakoid membrane. Component of the cytochrome b6-f complex, which mediates electron transfer between photosystem II (PSII) and photosystem I (PSI), cyclic electron flow around PSI, and state transitions. This chain is Cytochrome f, found in Ostreococcus tauri.